A 258-amino-acid chain; its full sequence is Spindlin-3 (258 aa).

Positions 1-23 (MKTPFGKAAAGQRSRTGAGHGSV) are disordered. Tudor-like domain regions lie at residues 50-99 (VGCR…LELH), 129-178 (VGKA…YQLL), and 210-255 (VGKQ…YDLV). Histone H3K4me3 and H3R8me2a binding stretches follow at residues Glu-138 and 246–248 (DFH).

It belongs to the SPIN/STSY family. Interacts with C11orf84/SPINDOC.

Exhibits H3K4me3-binding activity. The sequence is that of Spindlin-3 (SPIN3) from Homo sapiens (Human).